A 570-amino-acid polypeptide reads, in one-letter code: Urease subunit alpha (570 aa).

A Urease domain is found at 131 to 570 (GGFDSHIHFI…LPLAQRYFMF (440 aa)). Residues H136, H138, and K219 each contribute to the Ni(2+) site. K219 is subject to N6-carboxylysine. H221 is a substrate binding site. Positions 248 and 274 each coordinate Ni(2+). The active-site Proton donor is H322. D362 contributes to the Ni(2+) binding site.

This sequence belongs to the metallo-dependent hydrolases superfamily. Urease alpha subunit family. In terms of assembly, heterotrimer of UreA (gamma), UreB (beta) and UreC (alpha) subunits. Three heterotrimers associate to form the active enzyme. It depends on Ni cation as a cofactor. Carboxylation allows a single lysine to coordinate two nickel ions.

It is found in the cytoplasm. The catalysed reaction is urea + 2 H2O + H(+) = hydrogencarbonate + 2 NH4(+). It participates in nitrogen metabolism; urea degradation; CO(2) and NH(3) from urea (urease route): step 1/1. In Rhodopseudomonas palustris (strain ATCC BAA-98 / CGA009), this protein is Urease subunit alpha.